A 193-amino-acid chain; its full sequence is dCTP deaminase, dUMP-forming (193 aa).

Residues 101-106 (KSSLGR), Asp-119, 127-129 (TLE), Gln-148, Tyr-162, and Gln-174 contribute to the dCTP site. The active-site Proton donor/acceptor is Glu-129.

This sequence belongs to the dCTP deaminase family. As to quaternary structure, homotrimer.

The enzyme catalyses dCTP + 2 H2O = dUMP + NH4(+) + diphosphate. It participates in pyrimidine metabolism; dUMP biosynthesis; dUMP from dCTP: step 1/1. Functionally, bifunctional enzyme that catalyzes both the deamination of dCTP to dUTP and the hydrolysis of dUTP to dUMP without releasing the toxic dUTP intermediate. This is dCTP deaminase, dUMP-forming from Bifidobacterium adolescentis (strain ATCC 15703 / DSM 20083 / NCTC 11814 / E194a).